Reading from the N-terminus, the 636-residue chain is Biosynthetic arginine decarboxylase (636 aa).

Lys101 bears the N6-(pyridoxal phosphate)lysine mark. Position 286 to 296 (286 to 296 (FDVGGGLAVDY)) interacts with substrate.

Belongs to the Orn/Lys/Arg decarboxylase class-II family. SpeA subfamily. Requires Mg(2+) as cofactor. It depends on pyridoxal 5'-phosphate as a cofactor.

The catalysed reaction is L-arginine + H(+) = agmatine + CO2. It participates in amine and polyamine biosynthesis; agmatine biosynthesis; agmatine from L-arginine: step 1/1. Functionally, catalyzes the biosynthesis of agmatine from arginine. The chain is Biosynthetic arginine decarboxylase from Shewanella denitrificans (strain OS217 / ATCC BAA-1090 / DSM 15013).